We begin with the raw amino-acid sequence, 95 residues long: Small ribosomal subunit protein uS17 (95 aa).

It belongs to the universal ribosomal protein uS17 family. In terms of assembly, part of the 30S ribosomal subunit.

Functionally, one of the primary rRNA binding proteins, it binds specifically to the 5'-end of 16S ribosomal RNA. In Synechococcus sp. (strain CC9902), this protein is Small ribosomal subunit protein uS17.